A 556-amino-acid chain; its full sequence is Outer spore wall assembly protein SHE10 (556 aa).

The signal sequence occupies residues 1 to 21 (MRFLTKFLLFLATVYFGLKYA). Residues 135-201 (NKNLKRHVER…KQITSDVKKT (67 aa)) adopt a coiled-coil conformation. Basic and acidic residues predominate over residues 190–208 (EAKQITSDVKKTVESEIKK). Disordered stretches follow at residues 190–263 (EAKQ…EDIT) and 534–556 (RKEA…PISA). Residues 220-244 (IVSTSTIVKTITRTRHSSSSTTSTK) show a composition bias toward low complexity. The segment covering 245–256 (SAEETSEKNLET) has biased composition (basic and acidic residues). A coiled-coil region spans residues 481-547 (KISEFKLLLD…GEVNESSEEE (67 aa)).

It belongs to the SHE10 family. As to quaternary structure, component of the mitochondria-localized RNase mitochondrial RNA-processing (RNase MRP) composed of one single RNA encoded by the NME1 gene and at least 31 proteins. Absent in the nucleus-localized RNase MRP (NuMRP).

It is found in the mitochondrion. In terms of biological role, involved in spore wall assembly. May be a component of the mitochondrial RNase MRP (MtMRP), a ribonucleoprotein endoribonuclease involved in the cleaving RNA transcripts to generate primers for DNA replication in mitochondria. The polypeptide is Outer spore wall assembly protein SHE10 (Candida glabrata (strain ATCC 2001 / BCRC 20586 / JCM 3761 / NBRC 0622 / NRRL Y-65 / CBS 138) (Yeast)).